Consider the following 486-residue polypeptide: METVQLRNPRRQLKKLDEDSLTKQPEEVFDVLEKLGEGSYGSVFKAIHKETGQVVAIKQVPVESDLQEIIKEISIMQQCDSPHVVKYYGSYFKNTDLWIVMEYCGAGSVSDIIRLRNKTLTEEEIATIVQSTLKGLEYLHFMRKIHRDIKAGNILLNTEGHAKLADFGVAGQLTDTMAKRNTVIGTPFWMAPGVIQEIGYNCVADIWSLGITAIEMAEGKPPYADIHPMRAIFMIPTNPPPTFRKPELWSDAFTDFVKQCLVKSPEQRATAIQLLQHPFVKSAKGASILRDLINEAMDIKLKRQEAQQRELDQEDEENSEEDETDSGTMVRASGDETGTIRVVNTMSDGANTMIEHDGTLESQLGTMVINTEDEEEEGTMKRRDETMQPARPSFLEYFEQKAKENQVNSFGKNVSGQTKNSSDWKVPQDGDYEFLKTWSVDELQRRLSALDPMMEQEIEEIRQKYQSKRQPILDAIEAKKRRQQNF.

Residues 29 to 280 (FDVLEKLGEG…AIQLLQHPFV (252 aa)) enclose the Protein kinase domain. Residues 35–43 (LGEGSYGSV) and lysine 58 each bind ATP. Aspartate 148 functions as the Proton acceptor in the catalytic mechanism. Threonine 182 bears the Phosphothreonine; by autocatalysis mark. Positions 288–324 (ILRDLINEAMDIKLKRQEAQQRELDQEDEENSEEDET) form a coiled coil. The tract at residues 305–332 (EAQQRELDQEDEENSEEDETDSGTMVRA) is disordered. The segment covering 312 to 325 (DQEDEENSEEDETD) has biased composition (acidic residues). One can recognise an SARAH domain in the interval 432 to 479 (YEFLKTWSVDELQRRLSALDPMMEQEIEEIRQKYQSKRQPILDAIEAK).

Belongs to the protein kinase superfamily. STE Ser/Thr protein kinase family. STE20 subfamily. Homodimer; mediated via the coiled-coil region. Mg(2+) is required as a cofactor. Post-translationally, proteolytically cleaved by caspase-3 during apoptosis at Asp-325 resulting in a 37 kDa form. Proteolytic cleavage results in kinase activation and nuclear translocation of the truncated form (MST1/N).

It localises to the cytoplasm. It is found in the nucleus. It catalyses the reaction L-seryl-[protein] + ATP = O-phospho-L-seryl-[protein] + ADP + H(+). The enzyme catalyses L-threonyl-[protein] + ATP = O-phospho-L-threonyl-[protein] + ADP + H(+). With respect to regulation, the C-terminal non-catalytic region inhibits the kinase activity, the enzyme is activated by caspase-cleavage. Homodimerization and autophosphorylation of Thr-182 is also required for full activation. Functionally, stress-activated, pro-apoptotic kinase which, following caspase-cleavage, enters the nucleus and induces chromatin condensation followed by internucleosomal DNA fragmentation. Key component of the Hippo signaling pathway which plays a pivotal role in organ size control and tumor suppression by restricting proliferation and promoting apoptosis. The core of this pathway is composed of a kinase cascade wherein STK3/MST2 and STK4/MST1, in complex with its regulatory protein SAV1, phosphorylates and activates LATS1/2 in complex with its regulatory protein MOB1, which in turn phosphorylates and inactivates YAP1 oncoprotein and WWTR1/TAZ. Phosphorylation of YAP1 by LATS2 inhibits its translocation into the nucleus to regulate cellular genes important for cell proliferation, cell death, and cell migration. Phosphorylates 'Ser-14' of histone H2B (H2BS14ph) during apoptosis. Phosphorylates FOXO3 upon oxidative stress, which results in its nuclear translocation and cell death initiation. The polypeptide is Serine/threonine-protein kinase 4 (STK4) (Gallus gallus (Chicken)).